The following is a 658-amino-acid chain: Transmembrane 9 superfamily member 11 (658 aa).

The signal sequence occupies residues 1–23; the sequence is MRSMDRFGIWVLAILLVIQSSFG. Residues 24-291 lie on the Lumenal side of the membrane; the sequence is FYLPGSYPHK…LKMEGSKVHW (268 aa). Residues 292–312 traverse the membrane as a helical segment; it reads FSILNSLMVITFLAGIVLVIF. Residues 313–364 lie on the Cytoplasmic side of the membrane; that stretch reads LRTVRRDLTRYEELDKEAQAQMNEELSGWKLVVGDVFRAPSNASLLCVMVGD. A helical transmembrane segment spans residues 365 to 385; it reads GVQILGMAVVTILFAALGFMS. Residues 386-391 lie on the Lumenal side of the membrane; the sequence is PASRGT. The helical transmembrane segment at 392-412 threads the bilayer; that stretch reads LITGMLFFYMILGIAAGYVSV. Topologically, residues 413 to 432 are cytoplasmic; the sequence is RLWRTIGCGEHRGWMSVAWK. A helical membrane pass occupies residues 433-453; sequence AACFFPGIAFLILTTLNFLLW. Topologically, residues 454–462 are lumenal; the sequence is GSHSTGAIP. Residues 463 to 483 form a helical membrane-spanning segment; it reads FSLFVILLLLWFCISVPLTLI. Over 484-515 the chain is Cytoplasmic; the sequence is GGYFGAKAPHIEFPVRTNQIPREIPAQKYPSW. The chain crosses the membrane as a helical span at residues 516–536; the sequence is LLVLGAGTLPFGTLFIELFFI. At 537–547 the chain is on the lumenal side; that stretch reads MSSIWMGRVYY. A helical membrane pass occupies residues 548 to 568; that stretch reads VFGFLFVVLILLVVVCAEVSL. The Cytoplasmic segment spans residues 569 to 586; the sequence is VLTYMHLCVEDYKWWWKS. The helical transmembrane segment at 587–607 threads the bilayer; that stretch reads FFASGSVAIYIFIYSINYLVF. Topologically, residues 608-619 are lumenal; it reads DLKSLSGPVSAT. The chain crosses the membrane as a helical span at residues 620–640; the sequence is LYLGYSLFMVLAIMLATGTVG. The Cytoplasmic portion of the chain corresponds to 641–658; the sequence is FLSSFWFVHYLFSSVKLD. The Endoplasmic reticulum export signal motif lies at 647 to 652; the sequence is FVHYLF. A Golgi retention signal motif is present at residues 656–658; it reads KLD.

The protein belongs to the nonaspanin (TM9SF) (TC 9.A.2) family.

It is found in the endosome membrane. It localises to the golgi apparatus membrane. This chain is Transmembrane 9 superfamily member 11, found in Arabidopsis thaliana (Mouse-ear cress).